Reading from the N-terminus, the 401-residue chain is Mannonate dehydratase (401 aa).

The protein belongs to the mannonate dehydratase family. Requires Fe(2+) as cofactor. The cofactor is Mn(2+).

The catalysed reaction is D-mannonate = 2-dehydro-3-deoxy-D-gluconate + H2O. The protein operates within carbohydrate metabolism; pentose and glucuronate interconversion. Its function is as follows. Catalyzes the dehydration of D-mannonate. In Brucella canis (strain ATCC 23365 / NCTC 10854 / RM-666), this protein is Mannonate dehydratase.